The chain runs to 144 residues: Large ribosomal subunit protein uL13 (144 aa).

This sequence belongs to the universal ribosomal protein uL13 family. Part of the 50S ribosomal subunit.

Functionally, this protein is one of the early assembly proteins of the 50S ribosomal subunit, although it is not seen to bind rRNA by itself. It is important during the early stages of 50S assembly. In Mycoplasmopsis synoviae (strain 53) (Mycoplasma synoviae), this protein is Large ribosomal subunit protein uL13.